Reading from the N-terminus, the 157-residue chain is Protein Smg (157 aa).

Belongs to the Smg family.

The sequence is that of Protein Smg from Buchnera aphidicola subsp. Acyrthosiphon pisum (strain Tuc7).